Reading from the N-terminus, the 485-residue chain is UDP-N-acetylmuramoyl-L-alanyl-D-glutamate--2,6-diaminopimelate ligase (485 aa).

S30 is a UDP-N-acetyl-alpha-D-muramoyl-L-alanyl-D-glutamate binding site. 111–117 (GTNGKTT) contacts ATP. UDP-N-acetyl-alpha-D-muramoyl-L-alanyl-D-glutamate contacts are provided by residues 153-154 (TT), S180, Q186, and R188. K220 carries the N6-carboxylysine modification. Meso-2,6-diaminopimelate-binding positions include R378, 402 to 405 (DNPR), G455, and E459. Positions 402–405 (DNPR) match the Meso-diaminopimelate recognition motif motif.

This sequence belongs to the MurCDEF family. MurE subfamily. Mg(2+) serves as cofactor. Carboxylation is probably crucial for Mg(2+) binding and, consequently, for the gamma-phosphate positioning of ATP.

The protein resides in the cytoplasm. The catalysed reaction is UDP-N-acetyl-alpha-D-muramoyl-L-alanyl-D-glutamate + meso-2,6-diaminopimelate + ATP = UDP-N-acetyl-alpha-D-muramoyl-L-alanyl-gamma-D-glutamyl-meso-2,6-diaminopimelate + ADP + phosphate + H(+). Its pathway is cell wall biogenesis; peptidoglycan biosynthesis. In terms of biological role, catalyzes the addition of meso-diaminopimelic acid to the nucleotide precursor UDP-N-acetylmuramoyl-L-alanyl-D-glutamate (UMAG) in the biosynthesis of bacterial cell-wall peptidoglycan. This Bacteroides fragilis (strain ATCC 25285 / DSM 2151 / CCUG 4856 / JCM 11019 / LMG 10263 / NCTC 9343 / Onslow / VPI 2553 / EN-2) protein is UDP-N-acetylmuramoyl-L-alanyl-D-glutamate--2,6-diaminopimelate ligase.